Consider the following 42-residue polypeptide: Photosystem II reaction center protein J (42 aa).

A helical membrane pass occupies residues 10–30 (IPLWLVGTVVGLLAIGLLALF).

Belongs to the PsbJ family. PSII is composed of 1 copy each of membrane proteins PsbA, PsbB, PsbC, PsbD, PsbE, PsbF, PsbH, PsbI, PsbJ, PsbK, PsbL, PsbM, PsbT, PsbX, PsbY, PsbZ, Psb30/Ycf12, at least 3 peripheral proteins of the oxygen-evolving complex and a large number of cofactors. It forms dimeric complexes.

It is found in the plastid. The protein localises to the chloroplast thylakoid membrane. Functionally, one of the components of the core complex of photosystem II (PSII). PSII is a light-driven water:plastoquinone oxidoreductase that uses light energy to abstract electrons from H(2)O, generating O(2) and a proton gradient subsequently used for ATP formation. It consists of a core antenna complex that captures photons, and an electron transfer chain that converts photonic excitation into a charge separation. The polypeptide is Photosystem II reaction center protein J (Mesostigma viride (Green alga)).